The primary structure comprises 193 residues: uncharacterized protein (193 aa).

Positions 1 to 14 are cleaved as a signal peptide; sequence MSTSLLFSLSPSSS.

This is an uncharacterized protein from Saccharomyces cerevisiae (strain ATCC 204508 / S288c) (Baker's yeast).